A 552-amino-acid chain; its full sequence is Steroid transmembrane transporter SLC22A24 (552 aa).

A run of 12 helical transmembrane segments spans residues F16 to L36, S146 to L166, M174 to P194, F204 to W224, T235 to I255, T260 to V280, I349 to F369, L380 to M400, I407 to D427, I436 to F456, I473 to S493, and Y495 to L515.

It belongs to the major facilitator (TC 2.A.1) superfamily. Organic cation transporter (TC 2.A.1.19) family.

It localises to the cell membrane. It catalyses the reaction estrone 3-sulfate(out) + glutarate(in) = estrone 3-sulfate(in) + glutarate(out). The catalysed reaction is 17beta-estradiol 17-O-(beta-D-glucuronate)(out) + glutarate(in) = 17beta-estradiol 17-O-(beta-D-glucuronate)(in) + glutarate(out). The enzyme catalyses 5alpha-androstane-3alpha,17beta-diol 3-O-(beta-D-glucuronate)(out) + glutarate(in) = 5alpha-androstane-3alpha,17beta-diol 3-O-(beta-D-glucuronate)(in) + glutarate(out). It carries out the reaction dehydroepiandrosterone 3-sulfate(out) + glutarate(in) = dehydroepiandrosterone 3-sulfate(in) + glutarate(out). It catalyses the reaction glutarate(in) + succinate(out) = glutarate(out) + succinate(in). Renal transmembrane organic anion/dicarboxylate exchanger that participates in the reabsorption of conjugated steroids, as well as bile acids, driven by an outward gradient of dicarboxylates such as glutarate or succinate. Transports androstanediol glucuronide (5alpha-androstane-3alpha,17beta-diol 3-O-(beta-D-glucuronate)), estrone 3-sulfate, and estradiol-17-glucuronide (17beta-estradiol 17-O-(beta-D-glucuronate)), but not taurocholate. The protein is Steroid transmembrane transporter SLC22A24 of Microcebus murinus (Gray mouse lemur).